Here is a 246-residue protein sequence, read N- to C-terminus: Bis(5'-nucleosyl)-tetraphosphatase PrpE [asymmetrical] (246 aa).

It belongs to the PrpE family. Ni(2+) serves as cofactor.

The enzyme catalyses P(1),P(4)-bis(5'-guanosyl) tetraphosphate + H2O = GMP + GTP + 2 H(+). Functionally, asymmetrically hydrolyzes Ap4p to yield AMP and ATP. The polypeptide is Bis(5'-nucleosyl)-tetraphosphatase PrpE [asymmetrical] (Bacillus cereus (strain B4264)).